The chain runs to 257 residues: MDRIIEKLDHGWWVVSHEQKLWLPKGELPYGEAANFDLVGQRALQIGEWQGEPVWLVQQQRRHDMGSVRQVIDLDVRLFQLAGRGVQLAEFYRSHKYCGYCGHEMYPSKTEWAMLCSHCRERYYPQIAPCIIVAIRRDDSILLAQHTRHRNGVHTVLAGFVEVGETLEQAVAREVMEESGIKVKNLRYVTSQPWPFPQSLMTAFMAEYDSGDIVIDPKELLEANWYRYDDLPLLPPPGTVARRLIEDTVAMCRAEYE.

Substrate contacts are provided by lysine 25 and arginine 69. Zn(2+) is bound by residues cysteine 98 and cysteine 101. Substrate is bound at residue glutamate 111. Zn(2+)-binding residues include cysteine 116 and cysteine 119. Tyrosine 124 contacts substrate. Residues 125 to 248 (PQIAPCIIVA…TVARRLIEDT (124 aa)) enclose the Nudix hydrolase domain. Residues alanine 158, glutamate 174, and glutamate 178 each coordinate a divalent metal cation. Residues 159-180 (GFVEVGETLEQAVAREVMEESG) carry the Nudix box motif. 192–199 (QPWPFPQS) is a substrate binding site. An a divalent metal cation-binding site is contributed by glutamate 219. Residue alanine 241 participates in substrate binding.

It belongs to the Nudix hydrolase family. NudC subfamily. Homodimer. Mg(2+) is required as a cofactor. Requires Mn(2+) as cofactor. It depends on Zn(2+) as a cofactor.

The catalysed reaction is a 5'-end NAD(+)-phospho-ribonucleoside in mRNA + H2O = a 5'-end phospho-adenosine-phospho-ribonucleoside in mRNA + beta-nicotinamide D-ribonucleotide + 2 H(+). It catalyses the reaction NAD(+) + H2O = beta-nicotinamide D-ribonucleotide + AMP + 2 H(+). It carries out the reaction NADH + H2O = reduced beta-nicotinamide D-ribonucleotide + AMP + 2 H(+). In terms of biological role, mRNA decapping enzyme that specifically removes the nicotinamide adenine dinucleotide (NAD) cap from a subset of mRNAs by hydrolyzing the diphosphate linkage to produce nicotinamide mononucleotide (NMN) and 5' monophosphate mRNA. The NAD-cap is present at the 5'-end of some mRNAs and stabilizes RNA against 5'-processing. Has preference for mRNAs with a 5'-end purine. Catalyzes the hydrolysis of a broad range of dinucleotide pyrophosphates. This is NAD-capped RNA hydrolase NudC from Escherichia fergusonii (strain ATCC 35469 / DSM 13698 / CCUG 18766 / IAM 14443 / JCM 21226 / LMG 7866 / NBRC 102419 / NCTC 12128 / CDC 0568-73).